We begin with the raw amino-acid sequence, 99 residues long: Putative protein tag-209 (99 aa).

Positions 1–16 (MLKLLAFVALLSVSVS) are cleaved as a signal peptide.

In Caenorhabditis elegans, this protein is Putative protein tag-209 (tag-209).